The following is a 328-amino-acid chain: tRNA dimethylallyltransferase (328 aa).

Residue 23–30 participates in ATP binding; sequence GPTASGKS. Position 25-30 (25-30) interacts with substrate; it reads TASGKS. Residues 48–51 are interaction with substrate tRNA; the sequence is DSMQ.

It belongs to the IPP transferase family. Monomer. The cofactor is Mg(2+).

It carries out the reaction adenosine(37) in tRNA + dimethylallyl diphosphate = N(6)-dimethylallyladenosine(37) in tRNA + diphosphate. Its function is as follows. Catalyzes the transfer of a dimethylallyl group onto the adenine at position 37 in tRNAs that read codons beginning with uridine, leading to the formation of N6-(dimethylallyl)adenosine (i(6)A). This is tRNA dimethylallyltransferase from Rhodopseudomonas palustris (strain BisA53).